We begin with the raw amino-acid sequence, 494 residues long: Serine/threonine-protein kinase PBL13 (494 aa).

Cysteine 4 is lipidated: S-palmitoyl cysteine. Phosphothreonine is present on threonine 65. The 281-residue stretch at 76–356 (FSSSNFLGEG…STVVSVLQDI (281 aa)) folds into the Protein kinase domain. ATP-binding positions include 82–90 (LGEGGFGPV) and lysine 111. A Phosphotyrosine modification is found at tyrosine 156. The active-site Proton acceptor is the aspartate 206. A Phosphoserine modification is found at serine 210. Residue serine 240 is modified to Phosphoserine; by autocatalysis. 2 positions are modified to phosphothreonine: threonine 241 and threonine 246. At tyrosine 254 the chain carries Phosphotyrosine. A Phosphoserine; by autocatalysis modification is found at serine 321. Threonine 323 and threonine 383 each carry phosphothreonine; by autocatalysis. Serine 384 carries the post-translational modification Phosphoserine; by autocatalysis. Residues threonine 395, threonine 398, threonine 406, threonine 413, threonine 421, and threonine 428 each carry the phosphothreonine; by autocatalysis modification. The residue at position 429 (serine 429) is a Phosphoserine; by autocatalysis. The disordered stretch occupies residues 434–471 (DKTRREVKETSLQNFDKPRNVSTTDNHQKFRSPAHTAR). Phosphothreonine; by autocatalysis is present on threonine 443. Residues 443-458 (TSLQNFDKPRNVSTTD) are compositionally biased toward polar residues. Phosphoserine; by autocatalysis is present on residues serine 444 and serine 455. Threonine 456 is modified (phosphothreonine; by autocatalysis). Residues 462-471 (KFRSPAHTAR) are compositionally biased toward basic residues. A Phosphotyrosine; by autocatalysis modification is found at tyrosine 481.

Belongs to the protein kinase superfamily. Ser/Thr protein kinase family. In terms of assembly, interacts with RBHOD. Interaction is disrupted by flagellin-induced immune signaling.

It is found in the cell membrane. The catalysed reaction is L-seryl-[protein] + ATP = O-phospho-L-seryl-[protein] + ADP + H(+). It catalyses the reaction L-threonyl-[protein] + ATP = O-phospho-L-threonyl-[protein] + ADP + H(+). In terms of biological role, involved in defense responses. Acts as a negative regulator of plant immune responses. This is Serine/threonine-protein kinase PBL13 from Arabidopsis thaliana (Mouse-ear cress).